The primary structure comprises 267 residues: AMP/ADP-polyphosphate phosphotransferase (267 aa).

The protein belongs to the polyphosphate kinase 2 (PPK2) family. Class III subfamily. It depends on Mn(2+) as a cofactor.

The catalysed reaction is [phosphate](n) + ADP = [phosphate](n+1) + AMP. The enzyme catalyses [phosphate](n) + ATP = [phosphate](n+1) + ADP. Its function is as follows. Uses inorganic polyphosphate (polyP) as a donor to convert both AMP to ADP and ADP to ATP. Can also use GMP, CMP, UMP, GDP, CDP and UDP. The protein is AMP/ADP-polyphosphate phosphotransferase of Meiothermus ruber (strain ATCC 35948 / DSM 1279 / VKM B-1258 / 21) (Thermus ruber).